Here is a 532-residue protein sequence, read N- to C-terminus: Purple acid phosphatase 15 (532 aa).

The first 19 residues, 1-19 (MTFLLLLLFCFLSPAISSA), serve as a signal peptide directing secretion. Residue N136 is glycosylated (N-linked (GlcNAc...) asparagine). A Fe cation-binding site is contributed by D194. The N-linked (GlcNAc...) asparagine glycan is linked to N200. Fe cation contacts are provided by D221 and Y224. D221 contributes to the Zn(2+) binding site. N-linked (GlcNAc...) asparagine glycosylation is found at N231 and N264. N277 lines the Zn(2+) pocket. Position 277 (N277) interacts with substrate. N-linked (GlcNAc...) asparagine glycans are attached at residues N286 and N301. H359 contacts Zn(2+). The active-site Proton donor is the H369. Residue H396 coordinates Zn(2+). 396-398 (HVH) contributes to the substrate binding site. H398 is a binding site for Fe cation. A glycan (N-linked (GlcNAc...) asparagine) is linked at N491.

Belongs to the metallophosphoesterase superfamily. Purple acid phosphatase family. In terms of assembly, homodimer. Fe cation serves as cofactor. The cofactor is Zn(2+). As to expression, expressed in roots, stems, cotyledons, leaves, flowers and siliques.

The protein localises to the secreted. It carries out the reaction 1D-myo-inositol hexakisphosphate + H2O = 1D-myo-inositol 1,2,3,5,6-pentakisphosphate + phosphate. The enzyme catalyses a phosphate monoester + H2O = an alcohol + phosphate. Functionally, acid phosphatase activity with p-nitrophenyl phosphate (pNPP), D-myoinositol 1-phosphate (Ins(1)P1), phytic acid and Myo-inositol hexakisphosphate. Low or no activity with Glc-6-P and ATP. Confers shoot growth stimulation, enhanced salt and osmotic stress tolerance, and ABA insensitivity. May modulate ascorbic acid (AsA) levels by controlling the input of myoinositol into this branch of AsA biosynthesis. The sequence is that of Purple acid phosphatase 15 (PAP15) from Arabidopsis thaliana (Mouse-ear cress).